Reading from the N-terminus, the 356-residue chain is Phosphate acyltransferase (356 aa).

It belongs to the PlsX family. As to quaternary structure, homodimer. Probably interacts with PlsY.

Its subcellular location is the cytoplasm. It carries out the reaction a fatty acyl-[ACP] + phosphate = an acyl phosphate + holo-[ACP]. It functions in the pathway lipid metabolism; phospholipid metabolism. In terms of biological role, catalyzes the reversible formation of acyl-phosphate (acyl-PO(4)) from acyl-[acyl-carrier-protein] (acyl-ACP). This enzyme utilizes acyl-ACP as fatty acyl donor, but not acyl-CoA. The sequence is that of Phosphate acyltransferase from Shigella boydii serotype 4 (strain Sb227).